The sequence spans 360 residues: Meiosis-inducing protein 1 (360 aa).

The segment at 102 to 135 is disordered; sequence SKETKTTKDCTMATGPERGKKSSESTRSSSLSSL. Residues 126 to 135 show a composition bias toward low complexity; it reads STRSSSLSSL.

As to quaternary structure, interacts with UME6.

The protein resides in the nucleus. Transcription factor required for sporulation and for early sporulation-specific genes expression. Positive regulator of SME1/IME2 expression. Directly activates expression of SLZ1 during meiosis. The sequence is that of Meiosis-inducing protein 1 (IME1) from Saccharomyces cerevisiae (strain ATCC 204508 / S288c) (Baker's yeast).